We begin with the raw amino-acid sequence, 204 residues long: ATP synthase subunit b 2 (204 aa).

The interval 8–28 is disordered; sequence AQSSTTEGAEAHDAAAAGEVH. A helical membrane pass occupies residues 56 to 76; sequence LLWLAITFGLFYLLMSKVIIP.

It belongs to the ATPase B chain family. In terms of assembly, F-type ATPases have 2 components, F(1) - the catalytic core - and F(0) - the membrane proton channel. F(1) has five subunits: alpha(3), beta(3), gamma(1), delta(1), epsilon(1). F(0) has three main subunits: a(1), b(2) and c(10-14). The alpha and beta chains form an alternating ring which encloses part of the gamma chain. F(1) is attached to F(0) by a central stalk formed by the gamma and epsilon chains, while a peripheral stalk is formed by the delta and b chains.

It localises to the cell inner membrane. F(1)F(0) ATP synthase produces ATP from ADP in the presence of a proton or sodium gradient. F-type ATPases consist of two structural domains, F(1) containing the extramembraneous catalytic core and F(0) containing the membrane proton channel, linked together by a central stalk and a peripheral stalk. During catalysis, ATP synthesis in the catalytic domain of F(1) is coupled via a rotary mechanism of the central stalk subunits to proton translocation. In terms of biological role, component of the F(0) channel, it forms part of the peripheral stalk, linking F(1) to F(0). The b'-subunit is a diverged and duplicated form of b found in plants and photosynthetic bacteria. The sequence is that of ATP synthase subunit b 2 (atpF2) from Rhizobium meliloti (strain 1021) (Ensifer meliloti).